Reading from the N-terminus, the 119-residue chain is NADH-quinone oxidoreductase subunit A (119 aa).

3 helical membrane-spanning segments follow: residues 9–29 (VLLF…LGYV), 63–83 (LVAI…PWAV), and 88–108 (VGMA…VGFA).

The protein belongs to the complex I subunit 3 family. In terms of assembly, NDH-1 is composed of 14 different subunits. Subunits NuoA, H, J, K, L, M, N constitute the membrane sector of the complex.

Its subcellular location is the cell inner membrane. It carries out the reaction a quinone + NADH + 5 H(+)(in) = a quinol + NAD(+) + 4 H(+)(out). In terms of biological role, NDH-1 shuttles electrons from NADH, via FMN and iron-sulfur (Fe-S) centers, to quinones in the respiratory chain. The immediate electron acceptor for the enzyme in this species is believed to be ubiquinone. Couples the redox reaction to proton translocation (for every two electrons transferred, four hydrogen ions are translocated across the cytoplasmic membrane), and thus conserves the redox energy in a proton gradient. The protein is NADH-quinone oxidoreductase subunit A of Verminephrobacter eiseniae (strain EF01-2).